The following is a 451-amino-acid chain: Chromosomal replication initiator protein DnaA (451 aa).

Positions 1 to 82 (MENSLWKQCL…RLELQIGSSA (82 aa)) are domain I, interacts with DnaA modulators. The segment at 82–114 (AVVAPPRRRQVSVTTPSPSAAADQTPATRSAAS) is domain II. The interval 85 to 112 (APPRRRQVSVTTPSPSAAADQTPATRSA) is disordered. A domain III, AAA+ region region spans residues 115–331 (NLNSNFTFDT…GALRRVVANA (217 aa)). Residues glycine 159, glycine 161, lysine 162, and threonine 163 each contribute to the ATP site. Positions 332 to 451 (QFTGQEITVE…YSNLLRTLST (120 aa)) are domain IV, binds dsDNA.

The protein belongs to the DnaA family. As to quaternary structure, oligomerizes as a right-handed, spiral filament on DNA at oriC.

The protein localises to the cytoplasm. In terms of biological role, plays an essential role in the initiation and regulation of chromosomal replication. ATP-DnaA binds to the origin of replication (oriC) to initiate formation of the DNA replication initiation complex once per cell cycle. Binds the DnaA box (a 9 base pair repeat at the origin) and separates the double-stranded (ds)DNA. Forms a right-handed helical filament on oriC DNA; dsDNA binds to the exterior of the filament while single-stranded (ss)DNA is stabiized in the filament's interior. The ATP-DnaA-oriC complex binds and stabilizes one strand of the AT-rich DNA unwinding element (DUE), permitting loading of DNA polymerase. After initiation quickly degrades to an ADP-DnaA complex that is not apt for DNA replication. Binds acidic phospholipids. This chain is Chromosomal replication initiator protein DnaA, found in Alkalilimnicola ehrlichii (strain ATCC BAA-1101 / DSM 17681 / MLHE-1).